The following is a 717-amino-acid chain: Epithelial splicing regulatory protein 2 (717 aa).

The segment covering 1-14 (MTPPPPPPPPPGPD) has biased composition (pro residues). The tract at residues 1–23 (MTPPPPPPPPPGPDPAVDSATDP) is disordered. Ser83 is modified (phosphoserine). 3 RRM domains span residues 247 to 343 (TVVR…RFLS), 348 to 428 (VILR…RSTA), and 465 to 545 (DCVR…PCST). The residue at position 563 (Ser563) is a Phosphoserine.

It belongs to the ESRP family. As to quaternary structure, interacts with RBPMS. Epithelial cell-specific.

It is found in the nucleus. MRNA splicing factor that regulates the formation of epithelial cell-specific isoforms. Specifically regulates the expression of FGFR2-IIIb, an epithelial cell-specific isoform of FGFR2. Also regulates the splicing of CD44, CTNND1, ENAH, 3 transcripts that undergo changes in splicing during the epithelial-to-mesenchymal transition (EMT). Acts by directly binding specific sequences in mRNAs. Binds the GU-rich sequence motifs in the ISE/ISS-3, a cis-element regulatory region present in the mRNA of FGFR2. In Mus musculus (Mouse), this protein is Epithelial splicing regulatory protein 2 (Esrp2).